The following is a 140-amino-acid chain: MEAKTAQAVAKYVRTSPRKVRQVIDLIRGKSVADAFAILKFTPVKSAADVAKVLKSAVANAEHNYEMNTADLYVQTCFVDQGPSMKRISPRAQGRADVIKKRMSHITVIVAEKPAKPAAAKKDPKAAAAKADANAGTKEG.

The disordered stretch occupies residues 115–140; the sequence is AKPAAAKKDPKAAAAKADANAGTKEG.

It belongs to the universal ribosomal protein uL22 family. In terms of assembly, part of the 50S ribosomal subunit.

In terms of biological role, this protein binds specifically to 23S rRNA; its binding is stimulated by other ribosomal proteins, e.g. L4, L17, and L20. It is important during the early stages of 50S assembly. It makes multiple contacts with different domains of the 23S rRNA in the assembled 50S subunit and ribosome. The globular domain of the protein is located near the polypeptide exit tunnel on the outside of the subunit, while an extended beta-hairpin is found that lines the wall of the exit tunnel in the center of the 70S ribosome. This chain is Large ribosomal subunit protein uL22, found in Heliobacterium modesticaldum (strain ATCC 51547 / Ice1).